Here is a 475-residue protein sequence, read N- to C-terminus: Ankyrin repeat, SAM and basic leucine zipper domain-containing protein 1 (475 aa).

The segment at 1–25 is disordered; the sequence is MAAGPLRGLAVAGGGESSDSEDDGW. A phosphoserine mark is found at Ser-17, Ser-18, and Ser-20. 6 ANK repeats span residues 45 to 74, 78 to 107, 110 to 144, 148 to 177, 181 to 210, and 214 to 243; these read ERQE…SVDT, YGWT…NASF, DKQT…DPNV, RLMT…EVNT, NGYT…NKMI, and DGKT…PLEG. Positions 272–334 constitute an SAM domain; it reads SYTAFGDLEI…KIMAALKELE (63 aa).

As to quaternary structure, interacts with DDX4, PIWIL1, RANBP9 and TDRD1.

It is found in the cytoplasm. Functionally, plays a central role during spermatogenesis by repressing transposable elements and preventing their mobilization, which is essential for the germline integrity. Acts via the piRNA metabolic process, which mediates the repression of transposable elements during meiosis by forming complexes composed of piRNAs and Piwi proteins and governs the methylation and subsequent repression of transposons. Its association with pi-bodies suggests a participation in the primary piRNAs metabolic process. Required prior to the pachytene stage to facilitate the production of multiple types of piRNAs, including those associated with repeats involved in the regulation of retrotransposons. May act by mediating protein-protein interactions during germ cell maturation. This is Ankyrin repeat, SAM and basic leucine zipper domain-containing protein 1 (ASZ1) from Bos taurus (Bovine).